Consider the following 171-residue polypeptide: 3-hydroxydecanoyl-[acyl-carrier-protein] dehydratase (171 aa).

Residue histidine 70 is part of the active site.

It belongs to the thioester dehydratase family. FabA subfamily. As to quaternary structure, homodimer.

It is found in the cytoplasm. The catalysed reaction is a (3R)-hydroxyacyl-[ACP] = a (2E)-enoyl-[ACP] + H2O. It carries out the reaction (3R)-hydroxydecanoyl-[ACP] = (2E)-decenoyl-[ACP] + H2O. It catalyses the reaction (2E)-decenoyl-[ACP] = (3Z)-decenoyl-[ACP]. The protein operates within lipid metabolism; fatty acid biosynthesis. Functionally, necessary for the introduction of cis unsaturation into fatty acids. Catalyzes the dehydration of (3R)-3-hydroxydecanoyl-ACP to E-(2)-decenoyl-ACP and then its isomerization to Z-(3)-decenoyl-ACP. Can catalyze the dehydratase reaction for beta-hydroxyacyl-ACPs with saturated chain lengths up to 16:0, being most active on intermediate chain length. In Ectopseudomonas mendocina (strain ymp) (Pseudomonas mendocina), this protein is 3-hydroxydecanoyl-[acyl-carrier-protein] dehydratase.